The primary structure comprises 571 residues: Carboxylesterase 3 (571 aa).

An N-terminal signal peptide occupies residues 1–26 (MERAVRVESGVLVGVVCLLLACPATA). The cysteines at positions 97 and 124 are disulfide-linked. Residue N105 is glycosylated (N-linked (GlcNAc...) asparagine). The active-site Acyl-ester intermediate is S229. C281 and C292 form a disulfide bridge. Catalysis depends on charge relay system residues E347 and H460. The Prevents secretion from ER motif lies at 568 to 571 (QEDL).

It belongs to the type-B carboxylesterase/lipase family. Post-translationally, N-glycosylated. As to expression, expressed in liver, colon and small intestine.

It localises to the endoplasmic reticulum lumen. It catalyses the reaction a carboxylic ester + H2O = an alcohol + a carboxylate + H(+). Involved in the detoxification of xenobiotics and in the activation of ester and amide prodrugs. Shows low catalytic efficiency for hydrolysis of CPT-11 (7-ethyl-10-[4-(1-piperidino)-1-piperidino]-carbonyloxycamptothecin), a prodrug for camptothecin used in cancer therapeutics. The polypeptide is Carboxylesterase 3 (CES3) (Homo sapiens (Human)).